The sequence spans 97 residues: Small ribosomal subunit protein bS6 (97 aa).

This sequence belongs to the bacterial ribosomal protein bS6 family.

In terms of biological role, binds together with bS18 to 16S ribosomal RNA. The sequence is that of Small ribosomal subunit protein bS6 from Limosilactobacillus fermentum (strain NBRC 3956 / LMG 18251) (Lactobacillus fermentum).